Consider the following 88-residue polypeptide: Small ribosomal subunit protein uS15 (88 aa).

The protein belongs to the universal ribosomal protein uS15 family. Part of the 30S ribosomal subunit. Forms a bridge to the 50S subunit in the 70S ribosome, contacting the 23S rRNA.

One of the primary rRNA binding proteins, it binds directly to 16S rRNA where it helps nucleate assembly of the platform of the 30S subunit by binding and bridging several RNA helices of the 16S rRNA. Functionally, forms an intersubunit bridge (bridge B4) with the 23S rRNA of the 50S subunit in the ribosome. The sequence is that of Small ribosomal subunit protein uS15 from Albidiferax ferrireducens (strain ATCC BAA-621 / DSM 15236 / T118) (Rhodoferax ferrireducens).